We begin with the raw amino-acid sequence, 193 residues long: Probable type II restriction enzyme HpyAORF263P (193 aa).

This sequence belongs to the BsaWI type II restriction endonuclease family.

The catalysed reaction is Endonucleolytic cleavage of DNA to give specific double-stranded fragments with terminal 5'-phosphates.. Its function is as follows. A P subtype probable restriction enzyme that recognizes the double-stranded sequence CCGG; the cleavage site is unknown. This Helicobacter pylori (strain ATCC 700392 / 26695) (Campylobacter pylori) protein is Probable type II restriction enzyme HpyAORF263P.